Consider the following 197-residue polypeptide: Phospholipid hydroperoxide glutathione peroxidase (197 aa).

Ser-40 is modified (phosphoserine). Residue Sec-73 is part of the active site. Residue Sec-73 is a non-standard amino acid, selenocysteine. Val-78 is modified (phosphoserine).

It belongs to the glutathione peroxidase family. In terms of assembly, monomer. Has a tendency to form higher mass oligomers. Interacts with FUNDC1; this interaction promotes GPX4 recruitment into mitochondria through TOM/TIM complex where it is degraded by mitophagy. As to expression, present primarily in testis. Expressed in flagella of epididymal sperm. Isoform Cytoplasmic: Highly expressed in testis. Present in spermatogonia, spermatocyte and spermatid (at protein level).

The protein resides in the nucleus. It is found in the nucleolus. It localises to the mitochondrion. Its subcellular location is the cytoplasm. It catalyses the reaction a hydroperoxy polyunsaturated fatty acid + 2 glutathione = a hydroxy polyunsaturated fatty acid + glutathione disulfide + H2O. The enzyme catalyses 2 glutathione + H2O2 = glutathione disulfide + 2 H2O. It carries out the reaction tert-butyl hydroperoxide + 2 glutathione = tert-butanol + glutathione disulfide + H2O. The catalysed reaction is cumene hydroperoxide + 2 glutathione = 2-phenylpropan-2-ol + glutathione disulfide + H2O. It catalyses the reaction (9S)-hydroperoxy-(10E,12Z)-octadecadienoate + 2 glutathione = (9S)-hydroxy-(10E,12Z)-octadecadienoate + glutathione disulfide + H2O. The enzyme catalyses (13S)-hydroperoxy-(9Z,11E)-octadecadienoate + 2 glutathione = (13S)-hydroxy-(9Z,11E)-octadecadienoate + glutathione disulfide + H2O. It carries out the reaction (5S)-hydroperoxy-(6E,8Z,11Z,14Z)-eicosatetraenoate + 2 glutathione = (5S)-hydroxy-(6E,8Z,11Z,14Z)-eicosatetraenoate + glutathione disulfide + H2O. The catalysed reaction is (12R)-hydroperoxy-(5Z,8Z,10E,14Z)-eicosatetraenoate + 2 glutathione = (12R)-hydroxy-(5Z,8Z,10E,14Z)-eicosatetraenoate + glutathione disulfide + H2O. It catalyses the reaction (12S)-hydroperoxy-(5Z,8Z,10E,14Z)-eicosatetraenoate + 2 glutathione = (12S)-hydroxy-(5Z,8Z,10E,14Z)-eicosatetraenoate + glutathione disulfide + H2O. The enzyme catalyses (15S)-hydroperoxy-(5Z,8Z,11Z,13E)-eicosatetraenoate + 2 glutathione = (15S)-hydroxy-(5Z,8Z,11Z,13E)-eicosatetraenoate + glutathione disulfide + H2O. It carries out the reaction (5S)-hydroperoxy-(6E,8Z,11Z,14Z,17Z)-eicosapentaenoate + 2 glutathione = (5S)-hydroxy-(6E,8Z,11Z,14Z,17Z)-eicosapentaenoate + glutathione disulfide + H2O. The catalysed reaction is (12S)-hydroperoxy-(5Z,8Z,10E,14Z,17Z)-eicosapentaenoate + 2 glutathione = (12S)-hydroxy-(5Z,8Z,10E,14Z,17Z)-eicosapentaenoate + glutathione disulfide + H2O. It catalyses the reaction (15S)-hydroperoxy-(5Z,8Z,11Z,13E,17Z)-eicosapentaenoate + 2 glutathione = (15S)-hydroxy-(5Z,8Z,11Z,13E,17Z)-eicosapentaenoate + glutathione disulfide + H2O. The enzyme catalyses (15S)-hydroperoxy-(11Z,13E)-eicosadienoate + 2 glutathione = (15S)-hydroxy-(11Z,13E)-eicosadienoate + glutathione disulfide + H2O. It carries out the reaction (17S)-hydroperoxy-(4Z,7Z,10Z,13Z,15E,19Z)-docosahexaenoate + 2 glutathione = (17S)-hydroxy-(4Z,7Z,10Z,13Z,15E,19Z)-docosahexaenoate + glutathione disulfide + H2O. The catalysed reaction is a hydroperoxy-1,2-diacyl-glycero-3-phosphocholine + 2 glutathione = a hydroxy-1,2-diacyl-glycero-3-phosphocholine + glutathione disulfide + H2O. Essential antioxidant peroxidase that directly reduces phospholipid hydroperoxide even if they are incorporated in membranes and lipoproteins. Can also reduce fatty acid hydroperoxide, cholesterol hydroperoxide and thymine hydroperoxide. Plays a key role in protecting cells from oxidative damage by preventing membrane lipid peroxidation. Required to prevent cells from ferroptosis, a non-apoptotic cell death resulting from an iron-dependent accumulation of lipid reactive oxygen species. The presence of selenocysteine (Sec) versus Cys at the active site is essential for life: it provides resistance to overoxidation and prevents cells against ferroptosis. The presence of Sec at the active site is also essential for the survival of a specific type of parvalbumin-positive interneurons, thereby preventing against fatal epileptic seizures. May be required to protect cells from the toxicity of ingested lipid hydroperoxides. Required for normal sperm development and male fertility. Essential for maturation and survival of photoreceptor cells. Plays a role in a primary T-cell response to viral and parasitic infection by protecting T-cells from ferroptosis and by supporting T-cell expansion. Plays a role of glutathione peroxidase in platelets in the arachidonic acid metabolism. Reduces hydroperoxy ester lipids formed by a 15-lipoxygenase that may play a role as down-regulator of the cellular 15-lipoxygenase pathway. Can also reduce small soluble hydroperoxides such as H2O2, cumene hydroperoxide and tert-butyl hydroperoxide. Its function is as follows. Specifically able to suppress the production of leukotriene and prostaglandin in response to several stimuli by reducing fatty acid hydroperoxide. Functionally, specifically required to prevent mitochondrial cell death by mediating reduction of cardiolipin hydroperoxide. Also required for normal sperm development and male fertility. In terms of biological role, required for male fertility by stabilizing the condensed chromatin in sperm nuclei. This Rattus norvegicus (Rat) protein is Phospholipid hydroperoxide glutathione peroxidase.